A 291-amino-acid chain; its full sequence is Protease HtpX homolog (291 aa).

Transmembrane regions (helical) follow at residues 4–24 and 39–59; these read ILLF…VASL and SALL…SLLI. His-144 is a Zn(2+) binding site. Glu-145 is an active-site residue. His-148 contacts Zn(2+). A run of 2 helical transmembrane segments spans residues 159-179 and 199-219; these read LIQG…GYAV and VSTI…VAWF. Glu-224 contacts Zn(2+).

The protein belongs to the peptidase M48B family. Zn(2+) is required as a cofactor.

It is found in the cell inner membrane. In Polaromonas naphthalenivorans (strain CJ2), this protein is Protease HtpX homolog.